Reading from the N-terminus, the 472-residue chain is 4-O-methyl-glucuronoyl methylesterase 1 (472 aa).

The N-terminal stretch at 1–20 is a signal peptide; that stretch reads MKSAAYLAALAAVLPAYVNA. The 36-residue stretch at 21–56 folds into the CBM1 domain; the sequence is QAQEWGQCGGIGWTGATTCVSGTVCTVLNPYYSQCL. Positions 62–97 are disordered; sequence TAPPPPPPPPTSVSSSSSSSTSSAPPSGPSGTSPTC. Over residues 63-72 the composition is skewed to pro residues; the sequence is APPPPPPPPT. Low complexity predominate over residues 73–96; it reads SVSSSSSSSTSSAPPSGPSGTSPT. Cystine bridges form between cysteine 97–cysteine 131, cysteine 283–cysteine 419, and cysteine 315–cysteine 391. The GXSYXG catalytic site motif motif lies at 282 to 287; sequence GCSRDG. Serine 284 serves as the catalytic Nucleophile. The substrate site is built by lysine 288, glutamine 330, glutamate 338, and tryptophan 382. Catalysis depends on histidine 418, which acts as the Proton donor/acceptor. N-linked (GlcNAc...) asparagine glycosylation occurs at asparagine 465.

The protein belongs to the carbohydrate esterase 15 (CE15) family.

Its subcellular location is the secreted. The enzyme catalyses a 4-O-methyl-alpha-D-glucuronosyl ester derivative + H2O = 4-O-methyl-alpha-D-glucuronate derivative + an alcohol + H(+). Glucuronoyl esterase which may play a significant role in biomass degradation, as it is considered to disconnect hemicellulose from lignin through the hydrolysis of the ester bond between 4-O-methyl-D-glucuronic acid residues of glucuronoxylans and aromatic alcohols of lignin. Can hydrolyze benzyl glucuronic acid (BnGlcA), allyl glucuronic acid (allylGlcA) and to a lower degree methyl glucuronic acid (MeGlcA) in vitro. The sequence is that of 4-O-methyl-glucuronoyl methylesterase 1 from Phanerochaete chrysosporium (strain RP-78 / ATCC MYA-4764 / FGSC 9002) (White-rot fungus).